Here is a 356-residue protein sequence, read N- to C-terminus: UDP-N-acetylglucosamine--N-acetylmuramyl-(pentapeptide) pyrophosphoryl-undecaprenol N-acetylglucosamine transferase (356 aa).

Residues 12-14, N124, R163, S188, I242, 261-266, and Q287 each bind UDP-N-acetyl-alpha-D-glucosamine; these read TGG and ALTVSE.

The protein belongs to the glycosyltransferase 28 family. MurG subfamily.

It localises to the cell inner membrane. It carries out the reaction di-trans,octa-cis-undecaprenyl diphospho-N-acetyl-alpha-D-muramoyl-L-alanyl-D-glutamyl-meso-2,6-diaminopimeloyl-D-alanyl-D-alanine + UDP-N-acetyl-alpha-D-glucosamine = di-trans,octa-cis-undecaprenyl diphospho-[N-acetyl-alpha-D-glucosaminyl-(1-&gt;4)]-N-acetyl-alpha-D-muramoyl-L-alanyl-D-glutamyl-meso-2,6-diaminopimeloyl-D-alanyl-D-alanine + UDP + H(+). It functions in the pathway cell wall biogenesis; peptidoglycan biosynthesis. In terms of biological role, cell wall formation. Catalyzes the transfer of a GlcNAc subunit on undecaprenyl-pyrophosphoryl-MurNAc-pentapeptide (lipid intermediate I) to form undecaprenyl-pyrophosphoryl-MurNAc-(pentapeptide)GlcNAc (lipid intermediate II). The protein is UDP-N-acetylglucosamine--N-acetylmuramyl-(pentapeptide) pyrophosphoryl-undecaprenol N-acetylglucosamine transferase of Ectopseudomonas mendocina (strain ymp) (Pseudomonas mendocina).